Consider the following 128-residue polypeptide: Small ribosomal subunit protein uS9 (128 aa).

Belongs to the universal ribosomal protein uS9 family.

This Cytophaga hutchinsonii (strain ATCC 33406 / DSM 1761 / CIP 103989 / NBRC 15051 / NCIMB 9469 / D465) protein is Small ribosomal subunit protein uS9.